A 241-amino-acid chain; its full sequence is MSRVALVTGGSRGIGAAICVALKAAGYKVAANYAGNDERAKAFEQESGIPVYKWDVSSYQACVDGIARVEADLGPVDILVNNAGITRDAMFHKMTPEQWGEVIGTNLTGVFNMTHPLWSGMRDRGFGRIVNISSINGQKGQMGQVNYSAAKAGDLGLTKALAQEGAAKGITVNAICPGYIGTEMVRAVPEKVLNERIIPQIPVGRLGEPEEVARCVVFLASDDAGFITGSTISANGGQYFA.

NADP(+) contacts are provided by residues 12–14 (RGI), Arg-39, and 82–86 (NAGIT). Substrate-binding positions include Asp-88 and 141–144 (QMGQ). Catalysis depends on Tyr-147, which acts as the Proton acceptor. 177-180 (PGYI) is a binding site for NADP(+). 178 to 179 (GY) is a substrate binding site.

It belongs to the short-chain dehydrogenases/reductases (SDR) family.

The protein localises to the cytoplasm. The catalysed reaction is a (3R)-3-hydroxyacyl-CoA + NADP(+) = a 3-oxoacyl-CoA + NADPH + H(+). It functions in the pathway biopolymer metabolism; poly-(R)-3-hydroxybutanoate biosynthesis. This is Acetoacetyl-CoA reductase from Rhizobium meliloti (strain 1021) (Ensifer meliloti).